Consider the following 813-residue polypeptide: Leucine--tRNA ligase (813 aa).

The short motif at 42–52 is the 'HIGH' region element; the sequence is PYTSGNLHIGH. The 'KMSKS' region motif lies at 580 to 584; it reads KMSKS. Lys-583 provides a ligand contact to ATP.

The protein belongs to the class-I aminoacyl-tRNA synthetase family.

It localises to the cytoplasm. The catalysed reaction is tRNA(Leu) + L-leucine + ATP = L-leucyl-tRNA(Leu) + AMP + diphosphate. This chain is Leucine--tRNA ligase, found in Dehalococcoides mccartyi (strain CBDB1).